A 241-amino-acid polypeptide reads, in one-letter code: LexA repressor (241 aa).

The H-T-H motif DNA-binding region spans 26–46 (FDEMKTALDLRSKSGIHRLIT). Residues serine 162 and lysine 200 each act as for autocatalytic cleavage activity in the active site.

This sequence belongs to the peptidase S24 family. In terms of assembly, homodimer.

It catalyses the reaction Hydrolysis of Ala-|-Gly bond in repressor LexA.. In terms of biological role, represses a number of genes involved in the response to DNA damage (SOS response), including recA and lexA. In the presence of single-stranded DNA, RecA interacts with LexA causing an autocatalytic cleavage which disrupts the DNA-binding part of LexA, leading to derepression of the SOS regulon and eventually DNA repair. The polypeptide is LexA repressor (Ruegeria sp. (strain TM1040) (Silicibacter sp.)).